A 209-amino-acid polypeptide reads, in one-letter code: Imidazole glycerol phosphate synthase subunit HisH (209 aa).

Positions 3 to 209 (SVAVIDYGMG…ANFLTWNGVS (207 aa)) constitute a Glutamine amidotransferase type-1 domain. Catalysis depends on Cys-82, which acts as the Nucleophile. Active-site residues include His-187 and Glu-189.

As to quaternary structure, heterodimer of HisH and HisF.

The protein localises to the cytoplasm. The catalysed reaction is 5-[(5-phospho-1-deoxy-D-ribulos-1-ylimino)methylamino]-1-(5-phospho-beta-D-ribosyl)imidazole-4-carboxamide + L-glutamine = D-erythro-1-(imidazol-4-yl)glycerol 3-phosphate + 5-amino-1-(5-phospho-beta-D-ribosyl)imidazole-4-carboxamide + L-glutamate + H(+). It carries out the reaction L-glutamine + H2O = L-glutamate + NH4(+). The protein operates within amino-acid biosynthesis; L-histidine biosynthesis; L-histidine from 5-phospho-alpha-D-ribose 1-diphosphate: step 5/9. Functionally, IGPS catalyzes the conversion of PRFAR and glutamine to IGP, AICAR and glutamate. The HisH subunit catalyzes the hydrolysis of glutamine to glutamate and ammonia as part of the synthesis of IGP and AICAR. The resulting ammonia molecule is channeled to the active site of HisF. The sequence is that of Imidazole glycerol phosphate synthase subunit HisH from Nitrosococcus oceani (strain ATCC 19707 / BCRC 17464 / JCM 30415 / NCIMB 11848 / C-107).